Here is a 264-residue protein sequence, read N- to C-terminus: Sec-independent protein translocase protein TatC (264 aa).

The next 6 membrane-spanning stretches (helical) occupy residues V20–E40, F85–V105, A131–L151, F175–A195, I211–G231, and V232–A252.

It belongs to the TatC family. In terms of assembly, forms a complex with TatA.

Its subcellular location is the cell membrane. Functionally, part of the twin-arginine translocation (Tat) system that transports large folded proteins containing a characteristic twin-arginine motif in their signal peptide across membranes. This Cenarchaeum symbiosum (strain A) protein is Sec-independent protein translocase protein TatC.